We begin with the raw amino-acid sequence, 324 residues long: Polyprenol dehydrogenase (324 aa).

The active-site Proton acceptor is the Tyr-206. NAD(+)-binding residues include Tyr-206, Lys-210, and Thr-243.

It belongs to the short-chain dehydrogenases/reductases (SDR) family.

It localises to the lipid droplet. The enzyme catalyses a di-trans,poly-cis-polyprenol + NAD(+) = a di-trans,poly-cis-polyprenal + NADH + H(+). It catalyses the reaction a di-trans,poly-cis-polyprenol + NADP(+) = a di-trans,poly-cis-polyprenal + NADPH + H(+). It carries out the reaction a di-trans,poly-cis-dolichol + NADP(+) = a di-trans,poly-cis-dolichal + NADPH + H(+). The catalysed reaction is a di-trans,poly-cis-dolichol + NAD(+) = a di-trans,poly-cis-dolichal + NADH + H(+). Its pathway is protein modification; protein glycosylation. Functionally, oxidoreductase that plays a key role in early steps of protein N-linked glycosylation by mediating two non-consecutive steps in dolichol biosynthesis. Acts both as a NAD(+)-dependent dehydrogenase and as a NADPH-dependent reductase during the conversion of polyprenol into dolichol. First catalyzes the NAD(+)-dependent dehydrogenation of polyprenol into polyprenal; polyprenal is then reduced into dolichal by srd5a3. It then catalyzes the NADPH-dependent reduction of dolichal into dolichol. This is Polyprenol dehydrogenase from Danio rerio (Zebrafish).